A 374-amino-acid polypeptide reads, in one-letter code: MAGTDREKALDAALAQIERQFGKGAVMRMGDRTNEPIEVIPTGSTALDVALGVGGIPRGRVVEVYGPESSGKTTLTLHAVANAQKAGGQVAFVDAEHALDPEYAKKLGVDIDNLILSQPDNGEQALEIVDMLVRSGALDLIVIDSVAALVPRAEIEGEMGDSHVGLQARLMSQALRKITSALNQSKTTAIFINQLREKIGVMFGSPETTTGGRALKFYASVRLDIRRIETLKDGTDAVGNRTRVKVVKNKVAPPFKQAEFDILYGQGISREGGLIDMGVENGFVRKAGAWYTYEGDQLGQGKENARNFLKDNPDLANEIEKKIKQKLGVGVHPEESATEPGADAASAAPADAAPAVPAPTTAKATKSKATAAKS.

66–73 is an ATP binding site; it reads GPESSGKT. The segment at 326-374 is disordered; it reads KLGVGVHPEESATEPGADAASAAPADAAPAVPAPTTAKATKSKATAAKS. Positions 338–374 are enriched in low complexity; sequence TEPGADAASAAPADAAPAVPAPTTAKATKSKATAAKS.

This sequence belongs to the RecA family.

Its subcellular location is the cytoplasm. Its function is as follows. Can catalyze the hydrolysis of ATP in the presence of single-stranded DNA, the ATP-dependent uptake of single-stranded DNA by duplex DNA, and the ATP-dependent hybridization of homologous single-stranded DNAs. It interacts with LexA causing its activation and leading to its autocatalytic cleavage. The chain is Protein RecA from Streptomyces coelicolor (strain ATCC BAA-471 / A3(2) / M145).